Consider the following 330-residue polypeptide: D-lactate dehydrogenase (330 aa).

NAD(+) is bound by residues 156-157 (RI), D176, 206-207 (VP), 233-235 (AAR), and D259. Residue R235 is part of the active site. E264 is a catalytic residue. H296 acts as the Proton donor in catalysis.

This sequence belongs to the D-isomer specific 2-hydroxyacid dehydrogenase family.

It carries out the reaction (R)-lactate + NAD(+) = pyruvate + NADH + H(+). This Staphylococcus aureus (strain MRSA252) protein is D-lactate dehydrogenase (ldhD).